Consider the following 362-residue polypeptide: Sulfate/thiosulfate import ATP-binding protein CysA (362 aa).

In terms of domain architecture, ABC transporter spans isoleucine 3 to leucine 237. Glycine 35–threonine 42 contacts ATP.

The protein belongs to the ABC transporter superfamily. Sulfate/tungstate importer (TC 3.A.1.6) family. In terms of assembly, the complex is composed of two ATP-binding proteins (CysA), two transmembrane proteins (CysT and CysW) and a solute-binding protein (CysP).

The protein localises to the cell inner membrane. It catalyses the reaction sulfate(out) + ATP + H2O = sulfate(in) + ADP + phosphate + H(+). The catalysed reaction is thiosulfate(out) + ATP + H2O = thiosulfate(in) + ADP + phosphate + H(+). Functionally, part of the ABC transporter complex CysAWTP involved in sulfate/thiosulfate import. Responsible for energy coupling to the transport system. This chain is Sulfate/thiosulfate import ATP-binding protein CysA, found in Photorhabdus laumondii subsp. laumondii (strain DSM 15139 / CIP 105565 / TT01) (Photorhabdus luminescens subsp. laumondii).